Here is a 603-residue protein sequence, read N- to C-terminus: NADPH-dependent diflavin oxidoreductase 1 (603 aa).

The region spanning 10-155 (VTILYGSETG…YYSEWETNLL (146 aa)) is the Flavodoxin-like domain. Residues 16–21 (SETGNA), 64–67 (STTG), 102–111 (IGDSSYPKFN), and E137 each bind FMN. The 243-residue stretch at 209-451 (TNLLLGSVKA…HKSNLKFELP (243 aa)) folds into the FAD-binding FR-type domain. FAD-binding positions include R359, 390-393 (RLFS), and 422-425 (GLCT). NADP(+) is bound by residues T465 and 521–522 (SR). An FAD-binding site is contributed by W603.

This sequence belongs to the NADPH-dependent diflavin oxidoreductase NDOR1 family. The protein in the N-terminal section; belongs to the flavodoxin family. It in the C-terminal section; belongs to the flavoprotein pyridine nucleotide cytochrome reductase family. In terms of assembly, interacts with DRE2; as part of the cytosolic iron-sulfur (Fe-S) protein assembly (CIA) machinery. It depends on FAD as a cofactor. FMN serves as cofactor.

It localises to the cytoplasm. Its subcellular location is the mitochondrion. It catalyses the reaction 2 oxidized [2Fe-2S]-[protein] + NADPH = 2 reduced [2Fe-2S]-[protein] + NADP(+) + H(+). NADPH-dependent reductase which is a central component of the cytosolic iron-sulfur (Fe-S) protein assembly (CIA) machinery. Transfers electrons from NADPH via its FAD and FMN prosthetic groups to the [2Fe-2S] cluster of DRE2, another key component of the CIA machinery. In turn, this reduced cluster provides electrons for assembly of cytosolic iron-sulfur cluster proteins. Positively controls H(2)O(2)-induced cell death. The polypeptide is NADPH-dependent diflavin oxidoreductase 1 (Debaryomyces hansenii (strain ATCC 36239 / CBS 767 / BCRC 21394 / JCM 1990 / NBRC 0083 / IGC 2968) (Yeast)).